The following is a 141-amino-acid chain: Hemoglobin subunit alpha (141 aa).

The Globin domain maps to 1 to 141; that stretch reads VLSGDDKSNL…VSTVLTSKYR (141 aa). Serine 3 is modified (phosphoserine). An N6-succinyllysine mark is found at lysine 7 and lysine 11. An N6-acetyllysine; alternate modification is found at lysine 16. Lysine 16 is subject to N6-succinyllysine; alternate. Tyrosine 24 bears the Phosphotyrosine mark. Residue lysine 40 is modified to N6-succinyllysine. Phosphoserine is present on serine 49. Position 58 (histidine 58) interacts with O2. Histidine 87 serves as a coordination point for heme b. Serine 102 carries the phosphoserine modification. Threonine 108 is subject to Phosphothreonine. Residues serine 124 and serine 131 each carry the phosphoserine modification. 2 positions are modified to phosphothreonine: threonine 134 and threonine 137. Serine 138 carries the post-translational modification Phosphoserine.

It belongs to the globin family. In terms of assembly, heterotetramer of two alpha chains and two beta chains. In terms of tissue distribution, red blood cells.

Involved in oxygen transport from the lung to the various peripheral tissues. The protein is Hemoglobin subunit alpha of Microtus pennsylvanicus (Meadow vole).